We begin with the raw amino-acid sequence, 603 residues long: Geraniol synthase, chloroplastic (603 aa).

The N-terminal 50 residues, 1–50 (MALQMIAPFLSSFLPNPRHSLAAHGLTHQKCVSKHISCSTTTPTYSTTVP), are a transit peptide targeting the chloroplast. 5 residues coordinate (2E)-geranyl diphosphate: Arg301, Asp338, Asp342, Arg479, and Asp482. Mg(2+) contacts are provided by Asp338 and Asp342. The DDXXD motif signature appears at 338 to 342 (DDIYD). Residues Asp482, Thr486, and Glu490 each contribute to the Mg(2+) site.

It belongs to the terpene synthase family. Tpsb subfamily. Homodimer. Requires Mg(2+) as cofactor. Mn(2+) is required as a cofactor. Expressed in the oil cells of the leaves.

It is found in the plastid. It localises to the chloroplast. The enzyme catalyses (2E)-geranyl diphosphate + H2O = (2E)-geraniol + diphosphate. Its pathway is secondary metabolite biosynthesis; terpenoid biosynthesis. Functionally, monoterpene synthase that catalyzes the formation of geraniol from geranyl diphosphate. This is Geraniol synthase, chloroplastic (GerS) from Cinnamomum tenuipile (Alseodaphne mollis).